Consider the following 159-residue polypeptide: Large ribosomal subunit protein uL11 (159 aa).

Belongs to the universal ribosomal protein uL11 family. Part of the ribosomal stalk of the 50S ribosomal subunit. Interacts with L10 and the large rRNA to form the base of the stalk. L10 forms an elongated spine to which L12 dimers bind in a sequential fashion forming a multimeric L10(L12)X complex.

Its function is as follows. Forms part of the ribosomal stalk which helps the ribosome interact with GTP-bound translation factors. This chain is Large ribosomal subunit protein uL11, found in Methanothrix thermoacetophila (strain DSM 6194 / JCM 14653 / NBRC 101360 / PT) (Methanosaeta thermophila).